A 185-amino-acid chain; its full sequence is Acireductone dioxygenase (185 aa).

Residues His96, His98, Glu102, and His140 each contribute to the Fe(2+) site. Residues His96, His98, Glu102, and His140 each coordinate Ni(2+).

The protein belongs to the acireductone dioxygenase (ARD) family. Monomer. Requires Fe(2+) as cofactor. The cofactor is Ni(2+).

The catalysed reaction is 1,2-dihydroxy-5-(methylsulfanyl)pent-1-en-3-one + O2 = 3-(methylsulfanyl)propanoate + CO + formate + 2 H(+). It catalyses the reaction 1,2-dihydroxy-5-(methylsulfanyl)pent-1-en-3-one + O2 = 4-methylsulfanyl-2-oxobutanoate + formate + 2 H(+). It participates in amino-acid biosynthesis; L-methionine biosynthesis via salvage pathway; L-methionine from S-methyl-5-thio-alpha-D-ribose 1-phosphate: step 5/6. Catalyzes 2 different reactions between oxygen and the acireductone 1,2-dihydroxy-3-keto-5-methylthiopentene (DHK-MTPene) depending upon the metal bound in the active site. Fe-containing acireductone dioxygenase (Fe-ARD) produces formate and 2-keto-4-methylthiobutyrate (KMTB), the alpha-ketoacid precursor of methionine in the methionine recycle pathway. Ni-containing acireductone dioxygenase (Ni-ARD) produces methylthiopropionate, carbon monoxide and formate, and does not lie on the methionine recycle pathway. This chain is Acireductone dioxygenase, found in Marinobacter nauticus (strain ATCC 700491 / DSM 11845 / VT8) (Marinobacter aquaeolei).